The following is a 438-amino-acid chain: Mitochondrial distribution and morphology protein 12 (438 aa).

Residues 1-438 (MSIEVDWAAA…VYPSFWTFLV (438 aa)) form the SMP-LTD domain. Disordered regions lie at residues 110–154 (SFSH…TSTL), 185–277 (SDSG…MRER), and 353–379 (GSEQSQGSQNPSDDGRPRSGGDQKDKE). Residues 212-226 (DTTNSTSRPSTANTL) are compositionally biased toward polar residues. Residues 227–245 (PSHPSLGHSGSSGSNPHTS) are compositionally biased toward low complexity. The span at 354-364 (SEQSQGSQNPS) shows a compositional bias: polar residues. The span at 365–379 (DDGRPRSGGDQKDKE) shows a compositional bias: basic and acidic residues.

The protein belongs to the MDM12 family. As to quaternary structure, component of the ER-mitochondria encounter structure (ERMES) or MDM complex, composed of mmm1, mdm10, mdm12 and mdm34. A mmm1 homodimer associates with one molecule of mdm12 on each side in a pairwise head-to-tail manner, and the SMP-LTD domains of mmm1 and mdm12 generate a continuous hydrophobic tunnel for phospholipid trafficking.

It localises to the mitochondrion outer membrane. It is found in the endoplasmic reticulum membrane. Component of the ERMES/MDM complex, which serves as a molecular tether to connect the endoplasmic reticulum (ER) and mitochondria. Components of this complex are involved in the control of mitochondrial shape and protein biogenesis, and function in nonvesicular lipid trafficking between the ER and mitochondria. Mdm12 is required for the interaction of the ER-resident membrane protein mmm1 and the outer mitochondrial membrane-resident beta-barrel protein mdm10. The mdm12-mmm1 subcomplex functions in the major beta-barrel assembly pathway that is responsible for biogenesis of all mitochondrial outer membrane beta-barrel proteins, and acts in a late step after the SAM complex. The mdm10-mdm12-mmm1 subcomplex further acts in the TOM40-specific pathway after the action of the mdm12-mmm1 complex. Essential for establishing and maintaining the structure of mitochondria and maintenance of mtDNA nucleoids. This Penicillium rubens (strain ATCC 28089 / DSM 1075 / NRRL 1951 / Wisconsin 54-1255) (Penicillium chrysogenum) protein is Mitochondrial distribution and morphology protein 12.